Reading from the N-terminus, the 885-residue chain is DDT domain-containing protein DDB_G0282237 (885 aa).

The WAC domain occupies 20-125 (EEYFVIKFTK…GEIVSFKKAN (106 aa)). Disordered regions lie at residues 141-184 (ESDE…INAL), 201-264 (DDEN…SVRK), and 367-431 (LEDT…KENE). Residues 154 to 180 (SSSSSSTTTTTTTPTTPPTTTTTTSSS) show a composition bias toward low complexity. Residues 210–264 (KNNGDTSSDKKGEKEKEKEKEKEKEKEKEKEKEKEKEKEKEKEKEKDSDTKSVRK) are compositionally biased toward basic and acidic residues. A coiled-coil region spans residues 217 to 260 (SDKKGEKEKEKEKEKEKEKEKEKEKEKEKEKEKEKEKEKDSDTK). A compositionally biased stretch (acidic residues) spans 367 to 379 (LEDTEEESVDIES). Positions 380 to 396 (NDNSNSNGNSNSNNNLD) are enriched in low complexity. A DDT domain is found at 443 to 503 (SNTFGDFLMV…MKTIFTLPSY (61 aa)). The stretch at 530 to 565 (FQNEVKRIAIEEKEKQEKLKQLEEQNIRMLNLANEL) forms a coiled coil. Disordered stretches follow at residues 562-632 (ANEL…WKEE) and 707-744 (KQDDAAAAAEDDDENNEDDEEQQQQEVKKPKGAKQKKP). Residues 567–577 (GSDDEDDEMKL) show a composition bias toward acidic residues. A compositionally biased stretch (basic and acidic residues) spans 578 to 603 (DEDGNEIKKDVEMKDNDGTKDTKKDD). Coiled-coil stretches lie at residues 593–628 (NDGTKDTKKDDEENEEEEEEEEEEEEEVASDEGEEE) and 674–782 (ASEK…RDRN). 2 stretches are compositionally biased toward acidic residues: residues 604 to 631 (EENEEEEEEEEEEEEEVASDEGEEEWKE) and 715 to 729 (AEDDDENNEDDEEQQ).

It is found in the nucleus. The polypeptide is DDT domain-containing protein DDB_G0282237 (Dictyostelium discoideum (Social amoeba)).